The chain runs to 20 residues: Juvenile hormone-binding protein (20 aa).

It localises to the secreted. Its function is as follows. Prevents juvenile hormone from being hydrolyzed by general esterases by combining with it specifically. In Bombyx mori (Silk moth), this protein is Juvenile hormone-binding protein (JHBP).